Here is a 139-residue protein sequence, read N- to C-terminus: Large ribosomal subunit protein uL16 (139 aa).

The segment at 1–21 is disordered; it reads MLMPKRVQYRKTQRGRMKGNA. Residues 7–17 show a composition bias toward basic residues; the sequence is VQYRKTQRGRM.

It belongs to the universal ribosomal protein uL16 family. Part of the 50S ribosomal subunit.

In terms of biological role, binds 23S rRNA and is also seen to make contacts with the A and possibly P site tRNAs. The protein is Large ribosomal subunit protein uL16 of Chlorobaculum tepidum (strain ATCC 49652 / DSM 12025 / NBRC 103806 / TLS) (Chlorobium tepidum).